The chain runs to 226 residues: Cytidylate kinase (226 aa).

11-19 (GPASAGKST) is a binding site for ATP.

This sequence belongs to the cytidylate kinase family. Type 1 subfamily.

It localises to the cytoplasm. The catalysed reaction is CMP + ATP = CDP + ADP. It carries out the reaction dCMP + ATP = dCDP + ADP. The sequence is that of Cytidylate kinase from Limosilactobacillus fermentum (strain NBRC 3956 / LMG 18251) (Lactobacillus fermentum).